The chain runs to 193 residues: Ganglioside GM2 activator (193 aa).

The first 20 residues, 1–20, serve as a signal peptide directing secretion; it reads MHRLPLLLLLGLLLAGSVAP. Cystine bridges form between cysteine 39-cysteine 183, cysteine 99-cysteine 106, cysteine 112-cysteine 138, and cysteine 125-cysteine 136. A glycan (N-linked (GlcNAc...) asparagine) is linked at asparagine 151.

As to expression, widely expressed. Most abundant in kidney and testis.

The protein localises to the lysosome. The enzyme catalyses cholesterol(in) = cholesterol(out). Its function is as follows. Binds gangliosides and stimulates ganglioside GM2 degradation. It stimulates only the breakdown of ganglioside GM2 and glycolipid GA2 by beta-hexosaminidase A. It extracts single GM2 molecules from membranes and presents them in soluble form to beta-hexosaminidase A for cleavage of N-acetyl-D-galactosamine and conversion to GM3. The large binding pocket can accommodate several single chain phospholipids and fatty acids, GM2A also exhibits some calcium-independent phospholipase activity. Has cholesterol transfer activity. In Mus musculus (Mouse), this protein is Ganglioside GM2 activator.